Consider the following 509-residue polypeptide: Pentatricopeptide repeat-containing protein At2g13420, mitochondrial (509 aa).

The transit peptide at 1-19 (MLLLKQISPPFHLHQLRRR) directs the protein to the mitochondrion. 8 PPR repeats span residues 172–202 (RLVE…RKEE), 206–240 (DEKV…GIEP), 241–285 (NVVT…GIEP), 286–320 (DVTS…GISP), 321–355 (TIET…GISP), 356–390 (SSAT…LCKP), 391–425 (STQT…ETGP), and 426–460 (DLDS…GFLP).

Belongs to the PPR family. P subfamily.

It is found in the mitochondrion. This is Pentatricopeptide repeat-containing protein At2g13420, mitochondrial from Arabidopsis thaliana (Mouse-ear cress).